The primary structure comprises 266 residues: Small ribosomal subunit protein eS1 (266 aa).

A disordered region spans residues 234–266 (EGGTGTATKATGDDTGAKVERADGYEPPIQETV). Basic and acidic residues predominate over residues 244 to 257 (TGDDTGAKVERADG).

Belongs to the eukaryotic ribosomal protein eS1 family. Component of the small ribosomal subunit. Mature ribosomes consist of a small (40S) and a large (60S) subunit. The 40S subunit contains about 33 different proteins and 1 molecule of RNA (18S). The 60S subunit contains about 49 different proteins and 3 molecules of RNA (28S, 5.8S and 5S). Part of the small subunit (SSU) processome, composed of more than 70 proteins and the RNA chaperone small nucleolar RNA (snoRNA) U3.

The protein localises to the cytoplasm. It is found in the nucleus. It localises to the nucleolus. In terms of biological role, component of the small ribosomal subunit. The ribosome is a large ribonucleoprotein complex responsible for the synthesis of proteins in the cell. Part of the small subunit (SSU) processome, first precursor of the small eukaryotic ribosomal subunit. During the assembly of the SSU processome in the nucleolus, many ribosome biogenesis factors, an RNA chaperone and ribosomal proteins associate with the nascent pre-rRNA and work in concert to generate RNA folding, modifications, rearrangements and cleavage as well as targeted degradation of pre-ribosomal RNA by the RNA exosome. May play a role during erythropoiesis. The sequence is that of Small ribosomal subunit protein eS1 (rps3a) from Solea senegalensis (Senegalese sole).